The chain runs to 88 residues: Small ribosomal subunit protein bS16 (88 aa).

It belongs to the bacterial ribosomal protein bS16 family.

In Pelotomaculum thermopropionicum (strain DSM 13744 / JCM 10971 / SI), this protein is Small ribosomal subunit protein bS16.